We begin with the raw amino-acid sequence, 228 residues long: Small ribosomal subunit protein uS10m (228 aa).

A mitochondrion-targeting transit peptide spans 1-17; the sequence is MKRYMFGTLPRVQPKRC.

It belongs to the universal ribosomal protein uS10 family. Component of the mitochondrial small ribosomal subunit (mt-SSU). Mature yeast 74S mitochondrial ribosomes consist of a small (37S) and a large (54S) subunit. The 37S small subunit contains a 15S ribosomal RNA (15S mt-rRNA) and at least 32 different proteins. The 54S large subunit contains a 21S rRNA (21S mt-rRNA) and at least 45 different proteins.

The protein resides in the mitochondrion. In terms of biological role, component of the mitochondrial ribosome (mitoribosome), a dedicated translation machinery responsible for the synthesis of mitochondrial genome-encoded proteins, including at least some of the essential transmembrane subunits of the mitochondrial respiratory chain. The mitoribosomes are attached to the mitochondrial inner membrane and translation products are cotranslationally integrated into the membrane. The polypeptide is Small ribosomal subunit protein uS10m (rsm10) (Schizosaccharomyces pombe (strain 972 / ATCC 24843) (Fission yeast)).